Here is a 218-residue protein sequence, read N- to C-terminus: Lipoprotein-releasing system ATP-binding protein LolD (218 aa).

Residues 2-218 enclose the ABC transporter domain; sequence IKLEGITKSF…HMVDGTIKKD (217 aa). ATP is bound at residue 34 to 41; sequence GPSGAGKT.

Belongs to the ABC transporter superfamily. Lipoprotein translocase (TC 3.A.1.125) family. The complex is composed of two ATP-binding proteins (LolD) and two transmembrane proteins (LolC and LolE).

The protein resides in the cell inner membrane. In terms of biological role, part of the ABC transporter complex LolCDE involved in the translocation of mature outer membrane-directed lipoproteins, from the inner membrane to the periplasmic chaperone, LolA. Responsible for the formation of the LolA-lipoprotein complex in an ATP-dependent manner. In Bacteroides thetaiotaomicron (strain ATCC 29148 / DSM 2079 / JCM 5827 / CCUG 10774 / NCTC 10582 / VPI-5482 / E50), this protein is Lipoprotein-releasing system ATP-binding protein LolD.